A 304-amino-acid polypeptide reads, in one-letter code: Ribonuclease BN (304 aa).

Residues histidine 63, histidine 65, aspartate 67, histidine 68, histidine 140, aspartate 211, and histidine 269 each coordinate Zn(2+). The active-site Proton acceptor is aspartate 67.

Belongs to the RNase Z family. RNase BN subfamily. As to quaternary structure, homodimer. Zn(2+) is required as a cofactor.

Functionally, zinc phosphodiesterase, which has both exoribonuclease and endoribonuclease activities. This Cronobacter sakazakii (strain ATCC BAA-894) (Enterobacter sakazakii) protein is Ribonuclease BN.